A 167-amino-acid polypeptide reads, in one-letter code: Histidinol dehydrogenase (167 aa).

Residues Q109 and H112 each coordinate Zn(2+).

The protein belongs to the histidinol dehydrogenase family. Homodimer. Zn(2+) serves as cofactor.

The enzyme catalyses L-histidinol + 2 NAD(+) + H2O = L-histidine + 2 NADH + 3 H(+). Its pathway is amino-acid biosynthesis; L-histidine biosynthesis; L-histidine from 5-phospho-alpha-D-ribose 1-diphosphate: step 9/9. Its function is as follows. Catalyzes the sequential NAD-dependent oxidations of L-histidinol to L-histidinaldehyde and then to L-histidine. The sequence is that of Histidinol dehydrogenase (hisD) from Salmonella enteritidis.